Reading from the N-terminus, the 231-residue chain is Probable septum site-determining protein MinC (231 aa).

Positions 100 to 125 (EGKEKSPRPAPAPQAPAQNTTPVTKT) are disordered.

Belongs to the MinC family. In terms of assembly, interacts with MinD and FtsZ.

Its function is as follows. Cell division inhibitor that blocks the formation of polar Z ring septums. Rapidly oscillates between the poles of the cell to destabilize FtsZ filaments that have formed before they mature into polar Z rings. Prevents FtsZ polymerization. The sequence is that of Probable septum site-determining protein MinC from Escherichia coli O81 (strain ED1a).